The sequence spans 333 residues: Fatty acid hydroxylase domain-containing protein 2 (333 aa).

Transmembrane regions (helical) follow at residues 29–49 (FILG…TWHL), 77–97 (ILFF…FNGL), 134–154 (TVLF…YPFL), 168–188 (FHWF…LFYY), 215–235 (VISL…PVIV), and 237–257 (PLVM…ALII). The Fatty acid hydroxylase domain occupies 176–299 (AIFTLIEEVL…LGVLDHLHGT (124 aa)).

This sequence belongs to the sterol desaturase family. As to expression, down-regulated in primary acute myeloid leukemia (AML) patients.

The protein resides in the cytoplasm. The protein localises to the membrane. Promotes megakaryocyte differentiation by enhancing ERK phosphorylation and up-regulating RUNX1 expression. This Homo sapiens (Human) protein is Fatty acid hydroxylase domain-containing protein 2 (FAXDC2).